The primary structure comprises 273 residues: R-spondin-3 (273 aa).

The first 21 residues, 1–21 (MHLRLISWFFIILNFMEYIGS), serve as a signal peptide directing secretion. FU repeat units lie at residues 35 to 86 (PNVS…GYYG) and 92 to 135 (INKC…GLEA). Asn36 carries an N-linked (GlcNAc...) asparagine glycan. 11 disulfide bridges follow: Cys41–Cys48, Cys45–Cys54, Cys57–Cys76, Cys80–Cys95, Cys98–Cys105, Cys102–Cys111, Cys114–Cys125, Cys129–Cys142, Cys148–Cys190, Cys159–Cys166, and Cys199–Cys206. Residues 147–207 (HCEASEWSPW…KCTVQRKKCP (61 aa)) form the TSP type-1 domain. Positions 201 to 273 (VQRKKCPKGE…QKSVSVSTVH (73 aa)) are disordered. Positions 213–223 (RKGRERKRKKP) are enriched in basic residues. Over residues 224–252 (NKEESKDAIPDNKGLEPSRETPEQRENKQ) the composition is skewed to basic and acidic residues.

This sequence belongs to the R-spondin family. As to quaternary structure, interacts with the extracellular domain of FZD8 and LRP6. It however does not form a ternary complex with FZD8 and LRP6. Interacts with WNT1. Binds heparin. Interacts with LGR4, LGR5 and LGR6.

It localises to the secreted. In terms of biological role, activator of the canonical Wnt signaling pathway by acting as a ligand for LGR4-6 receptors, which acts as a key regulator of angiogenesis. Upon binding to LGR4-6 (LGR4, LGR5 or LGR6), LGR4-6 associate with phosphorylated LRP6 and frizzled receptors that are activated by extracellular Wnt receptors, triggering the canonical Wnt signaling pathway to increase expression of target genes. Also regulates the canonical Wnt/beta-catenin-dependent pathway and non-canonical Wnt signaling by acting as an inhibitor of ZNRF3, an important regulator of the Wnt signaling pathway. Acts as a ligand for frizzled FZD8 and LRP6. May negatively regulate the TGF-beta pathway. Acts as a key regulator of angiogenesis by controlling vascular stability and pruning: acts by activating the non-canonical Wnt signaling pathway in endothelial cells. Can also amplify Wnt signaling pathway independently of LGR4-6 receptors, possibly by acting as a direct antagonistic ligand to RNF43 and ZNRF3. This chain is R-spondin-3 (RSPO3), found in Bos taurus (Bovine).